The chain runs to 269 residues: Phosphate import ATP-binding protein PstB (269 aa).

One can recognise an ABC transporter domain in the interval 14 to 253 (LTLEDVSISY…EFDSTKKIFS (240 aa)). 46–53 (GPSGCGKS) contacts ATP.

This sequence belongs to the ABC transporter superfamily. Phosphate importer (TC 3.A.1.7) family. In terms of assembly, the complex is composed of two ATP-binding proteins (PstB), two transmembrane proteins (PstC and PstA) and a solute-binding protein (PstS).

The protein resides in the cell inner membrane. The catalysed reaction is phosphate(out) + ATP + H2O = ADP + 2 phosphate(in) + H(+). Its function is as follows. Part of the ABC transporter complex PstSACB involved in phosphate import. Responsible for energy coupling to the transport system. This Prochlorococcus marinus subsp. pastoris (strain CCMP1986 / NIES-2087 / MED4) protein is Phosphate import ATP-binding protein PstB.